Consider the following 480-residue polypeptide: Speriolin (480 aa).

Residues 1-76 form a necessary for targeting to centrosomes region; the sequence is MSLLTSYEGL…HQGVFLPPAS (76 aa). Residues 2–45 adopt a coiled-coil conformation; that stretch reads SLLTSYEGLRHQIERLVRENEELKKLVRLIRENQELKSAIKTQA. 2 disordered regions span residues 252–297 and 305–324; these read INNI…SRVM and VEMERKTPHRKSNKLPDNPR.

The protein belongs to the speriolin family. As to quaternary structure, found in a complex with CDC20, CDC27 and TUBG1. Interacts with CDC20. As to expression, expressed in testis. Expressed in pachyten spermatocytes, spermatids and epididymal sperm (at protein level).

The protein localises to the cytoplasm. It localises to the cytoskeleton. It is found in the microtubule organizing center. Its subcellular location is the centrosome. This is Speriolin (Spatc1) from Mus musculus (Mouse).